Here is a 259-residue protein sequence, read N- to C-terminus: MRILVSNDDGVDAAGIRMLASVLREAGHEVTVVAPDRDRSGASNSLTLDLPIRLKRIDHYTVSVAGTPTDCVHLALTGLLEFEPDIVVSGINNAANLGDDVIYSGTVSAAMEGRFLGLPAVAVSLVTRNHDPKHFETAARAAVEIVARLKADPLPADTILNVNVPDLPWNEVKGFEVTRLGNRHRAEGCIAQKDPRGNEVYWIGPAGREQDSGPGTDFHAVRTGHISITPIQVDLTRYQALEKVASWVGGLSAALDQPA.

A divalent metal cation is bound by residues Asp-8, Asp-9, Ser-40, and Asn-92.

This sequence belongs to the SurE nucleotidase family. A divalent metal cation serves as cofactor.

It localises to the cytoplasm. It catalyses the reaction a ribonucleoside 5'-phosphate + H2O = a ribonucleoside + phosphate. In terms of biological role, nucleotidase that shows phosphatase activity on nucleoside 5'-monophosphates. The polypeptide is 5'-nucleotidase SurE (Stenotrophomonas maltophilia (strain K279a)).